We begin with the raw amino-acid sequence, 207 residues long: Zinc finger protein 487 (207 aa).

A KRAB domain is found at 1–43 (MLENYSLLLSVGYCITKPEVVCKLEHGQVLWILEEESPSQSHL). The segment at 177–202 (KQCFEYNQCGKAFHEEAACSTHKRVC) adopts a C2H2-type; atypical zinc-finger fold.

This sequence belongs to the krueppel C2H2-type zinc-finger protein family.

The protein localises to the nucleus. Functionally, may be involved in transcriptional regulation. In Homo sapiens (Human), this protein is Zinc finger protein 487 (ZNF487).